The following is a 337-amino-acid chain: MTKSTVALTLGDPAGIGPELVAKLLAKQNIREKANIVLVADKDELEKGMEIAKAQFVYEEVSFHQLGQYEFKTGVPVLISHKSSHPKPFEYGKVTEQSGVYILETLKVALNLAKMGYVQAICFAPLNKQAMHKGGLRYRDELHWFAEQTDFNEFVCELNVVDDIWAARVTSHIPFKDIVPNLSIKGVFDCIHLLYRSLVQAGVENPKIAVQALNPHGGEGGVFGDEEMTIIQPGMEQARKAGIDVYGPFPGDTTMREVERLKINGVVSMYHDQFSTALKILGFERGVTVQGGIPIPITTANHGTAFDLHGKNIAIPTAFEAAFNIAVRMGQGVLNQK.

Residues H172, H216, and H271 each contribute to the a divalent metal cation site.

Belongs to the PdxA family. In terms of assembly, homodimer. The cofactor is Zn(2+). Mg(2+) serves as cofactor. Co(2+) is required as a cofactor.

It is found in the cytoplasm. The catalysed reaction is 4-(phosphooxy)-L-threonine + NAD(+) = 3-amino-2-oxopropyl phosphate + CO2 + NADH. It functions in the pathway cofactor biosynthesis; pyridoxine 5'-phosphate biosynthesis; pyridoxine 5'-phosphate from D-erythrose 4-phosphate: step 4/5. Functionally, catalyzes the NAD(P)-dependent oxidation of 4-(phosphooxy)-L-threonine (HTP) into 2-amino-3-oxo-4-(phosphooxy)butyric acid which spontaneously decarboxylates to form 3-amino-2-oxopropyl phosphate (AHAP). The protein is Putative 4-hydroxythreonine-4-phosphate dehydrogenase of Pasteurella multocida (strain Pm70).